A 691-amino-acid chain; its full sequence is MFCAKLKDLQITGDCPFSLLAPGQVPREPLGEATGSGPASTPGQPGVCPGVPDKNPPGRLPRRKTSRSRVYLHTLAESICKLIFPEFERLNLALQRTLAKHKIKENRKSLEREDFEKIVVDQAIAAGVPVEIIKESLGEELFKICYEEDEYILGVVGGTLKDFLNSFSTLLKQSSHCQEAEKKGRFEDASILCLDKDPDVLYVYYFFPKRITSLILPGIIKAAARILYETEVEVSSTPSRFHQDCREFVDQPCELYSVHIRSARPHPPPGKPVSSLVIPASLFCKTFPFHFMLDRDMSILQLGHGIRRLMSRRDVQGKPHFDEYFEILTPKISQTFSGIMTMLNMQFLVRVRRWDNSMKKSSRVMDLKGQMIYMVESSSILFLGSPCVDRLEDFTGRGLYLSDIPIHNALRDVVLIGEQARAQDGLKKRLGKLKATLEQAHQALEEEKRKTVDLLCSIFPSEVARQLWQGHAVQAKRFGNVTMLFSDIVGFTAICSQCSPLQVITMLNALYTRFDRQCGELDVYKVETIGDAYCVAGGLHKESDTHAVQIALMALKMMELSHEVVSPHGEPIKMRIGLHSGSVFAGVVGVKMPRYCLFGNNVTLANKFESCSVPRKINVSPTTYRLLKDCPGFVFTPRSREELPPNFPSDIPGICHFLEAYQQGTTSKPWFQKKDVEEANANFLGKASGID.

Positions 26-65 are disordered; that stretch reads PREPLGEATGSGPASTPGQPGVCPGVPDKNPPGRLPRRKT. The region spanning 482-609 is the Guanylate cyclase domain; it reads TMLFSDIVGF…NNVTLANKFE (128 aa).

It belongs to the adenylyl cyclase class-4/guanylyl cyclase family. As to quaternary structure, heterodimer of an alpha and a beta chain.

Its subcellular location is the cytoplasm. It carries out the reaction GTP = 3',5'-cyclic GMP + diphosphate. With respect to regulation, activated by nitric oxide in the presence of magnesium or manganese ions. This is Guanylate cyclase soluble subunit alpha-1 (GUCY1A1) from Bos taurus (Bovine).